The following is a 109-amino-acid chain: Cell division protein ZapA (109 aa).

Residues 22 to 99 (EQQDALNLAA…IEQALLEQGR (78 aa)) are a coiled coil.

This sequence belongs to the ZapA family. Type 1 subfamily. As to quaternary structure, homodimer. Interacts with FtsZ.

Its subcellular location is the cytoplasm. Functionally, activator of cell division through the inhibition of FtsZ GTPase activity, therefore promoting FtsZ assembly into bundles of protofilaments necessary for the formation of the division Z ring. It is recruited early at mid-cell but it is not essential for cell division. The sequence is that of Cell division protein ZapA from Erwinia tasmaniensis (strain DSM 17950 / CFBP 7177 / CIP 109463 / NCPPB 4357 / Et1/99).